Reading from the N-terminus, the 242-residue chain is Agamous-like MADS-box protein AGL8 (242 aa).

The 55-residue stretch at 3–57 (RGRVQLKRIENKINRQVTFSKRRSGLLKKAHEISVLCDAEVALIVFSSKGKLFEY) folds into the MADS-box domain. One can recognise a K-box domain in the interval 88–178 (SENWVLEHAK…LKKIKEREKK (91 aa)). Residues 89–178 (ENWVLEHAKL…LKKIKEREKK (90 aa)) adopt a coiled-coil conformation.

In terms of assembly, homodimer capable of binding to CArG-box sequences. As to expression, vascular tissue of cauline leaves, floral shoot apex and valves of carpels and fruits.

It is found in the nucleus. Its function is as follows. Probable transcription factor that promotes early floral meristem identity in synergy with APETALA1 and CAULIFLOWER. Is required subsequently for the transition of an inflorescence meristem into a floral meristem. Seems to be partially redundant to the function of APETALA1 and CAULIFLOWER in the up-regulation of LEAFY. Is also required for normal pattern of cell division, expansion and differentiation during morphogenesis of the silique. Probably not required for fruit elongation but instead is required to prevent ectopic activity of IND. Represses SAUR10 expression in stems and inflorescence branches. The sequence is that of Agamous-like MADS-box protein AGL8 (AGL8) from Arabidopsis thaliana (Mouse-ear cress).